A 538-amino-acid chain; its full sequence is Putative ABC1 protein At2g40090 (538 aa).

Positions 1–26 are cleaved as a signal peptide; the sequence is MAARSLWRTRTKLLVVGTALCGGSGA.

This sequence belongs to the protein kinase superfamily. ADCK protein kinase family.

The sequence is that of Putative ABC1 protein At2g40090 from Arabidopsis thaliana (Mouse-ear cress).